A 342-amino-acid polypeptide reads, in one-letter code: MQAVDNLTSAPGNTSLCTRDYKITQVLFPLLYTVLFFVGLITNGLAMRIFFQIRSKSNFIIFLKNTVISDLLMILTFPFKILSDAKLGTGPLRTFVCQVTSVIFYFTMYISISFLGLITIDRYQKTTRPFKTSNPKNLLGAKILSVVIWAFMFLLSLPNMILTNRQPRDKNVKKCSFLKSEFGLVWHEIVNYICQVIFWINFLIVIVCYTLITKELYRSYVRTRGVGKVPRKKVNVKVFIIIAVFFICFVPFHFARIPYTLSQTRDVFDCTAENTLFYVKESTLWLTSLNACLDPFIYFFLCKSFRNSLISMLKCPNSATSLSQDNRKKEQDGGDPNEETPM.

Residues 1–27 (MQAVDNLTSAPGNTSLCTRDYKITQVL) lie on the Extracellular side of the membrane. 2 N-linked (GlcNAc...) asparagine glycosylation sites follow: Asn6 and Asn13. Cystine bridges form between Cys17/Cys270 and Cys97/Cys175. The helical transmembrane segment at 28–50 (FPLLYTVLFFVGLITNGLAMRIF) threads the bilayer. At 51–61 (FQIRSKSNFII) the chain is on the cytoplasmic side. A phosphoserine mark is found at Ser55 and Ser57. The helical transmembrane segment at 62–82 (FLKNTVISDLLMILTFPFKIL) threads the bilayer. At 83 to 97 (SDAKLGTGPLRTFVC) the chain is on the extracellular side. ADP-binding residues include Arg93, Cys97, and Tyr105. The chain crosses the membrane as a helical span at residues 98–118 (QVTSVIFYFTMYISISFLGLI). Topologically, residues 119 to 142 (TIDRYQKTTRPFKTSNPKNLLGAK) are cytoplasmic. Residues 143-162 (ILSVVIWAFMFLLSLPNMIL) form a helical membrane-spanning segment. ADP-binding positions include 156–159 (SLPN), 175–179 (CSFLK), His187, and Asn191. The Extracellular portion of the chain corresponds to 163–185 (TNRQPRDKNVKKCSFLKSEFGLV). The helical transmembrane segment at 186–207 (WHEIVNYICQVIFWINFLIVIV) threads the bilayer. Residues 208–233 (CYTLITKELYRSYVRTRGVGKVPRKK) lie on the Cytoplasmic side of the membrane. A helical membrane pass occupies residues 234 to 259 (VNVKVFIIIAVFFICFVPFHFARIPY). Residues 256–259 (RIPY), Gln263, and Lys280 each bind ADP. Residues 260-278 (TLSQTRDVFDCTAENTLFY) are Extracellular-facing. The chain crosses the membrane as a helical span at residues 279–298 (VKESTLWLTSLNACLDPFIY). At 299–342 (FFLCKSFRNSLISMLKCPNSATSLSQDNRKKEQDGGDPNEETPM) the chain is on the cytoplasmic side. The disordered stretch occupies residues 319–342 (ATSLSQDNRKKEQDGGDPNEETPM). The segment covering 333-342 (GGDPNEETPM) has biased composition (acidic residues).

The protein belongs to the G-protein coupled receptor 1 family. As to expression, highly expressed in the platelets, lower levels in the brain. Lowest levels in the lung, appendix, pituitary and adrenal gland. Expressed in the spinal cord and in the fetal brain.

Its subcellular location is the cell membrane. Its function is as follows. Receptor for ADP and ATP coupled to G-proteins that inhibit the adenylyl cyclase second messenger system. Not activated by UDP and UTP. Required for normal platelet aggregation and blood coagulation. The protein is P2Y purinoceptor 12 (P2RY12) of Homo sapiens (Human).